We begin with the raw amino-acid sequence, 510 residues long: ATP-dependent zinc metalloprotease FtsH 2 (510 aa).

At 1 to 4 (MKKN) the chain is on the cytoplasmic side. A helical transmembrane segment spans residues 5 to 25 (LHIIILALSIFINLLFIYIFI). At 26–31 (SEVKPN) the chain is on the extracellular side. A helical membrane pass occupies residues 32-52 (LNLNLSFILTAAVIVVTYLLF). Topologically, residues 53–510 (KNKFSELMPV…LWEEENTLCV (458 aa)) are cytoplasmic. Residue 124 to 131 (GPPGTGKT) coordinates ATP. Position 343 (His343) interacts with Zn(2+). Residue Glu344 is part of the active site. 2 residues coordinate Zn(2+): His347 and Asp418.

In the central section; belongs to the AAA ATPase family. This sequence in the C-terminal section; belongs to the peptidase M41 family. As to quaternary structure, homohexamer. Requires Zn(2+) as cofactor.

It localises to the cell membrane. Acts as a processive, ATP-dependent zinc metallopeptidase for both cytoplasmic and membrane proteins. Plays a role in the quality control of integral membrane proteins. The polypeptide is ATP-dependent zinc metalloprotease FtsH 2 (Thermoanaerobacter sp. (strain X514)).